The sequence spans 291 residues: Elongation factor Ts (291 aa).

The segment at 79–82 (TDFV) is involved in Mg(2+) ion dislocation from EF-Tu.

The protein belongs to the EF-Ts family.

The protein localises to the cytoplasm. In terms of biological role, associates with the EF-Tu.GDP complex and induces the exchange of GDP to GTP. It remains bound to the aminoacyl-tRNA.EF-Tu.GTP complex up to the GTP hydrolysis stage on the ribosome. The polypeptide is Elongation factor Ts (Ruegeria sp. (strain TM1040) (Silicibacter sp.)).